The sequence spans 120 residues: Chaperonin GroEL (120 aa).

23–27 (DGTTT) provides a ligand contact to ATP.

The protein belongs to the chaperonin (HSP60) family. As to quaternary structure, forms a cylinder of 14 subunits composed of two heptameric rings stacked back-to-back. Interacts with the co-chaperonin GroES.

It is found in the cytoplasm. The enzyme catalyses ATP + H2O + a folded polypeptide = ADP + phosphate + an unfolded polypeptide.. Its function is as follows. Together with its co-chaperonin GroES, plays an essential role in assisting protein folding. The GroEL-GroES system forms a nano-cage that allows encapsulation of the non-native substrate proteins and provides a physical environment optimized to promote and accelerate protein folding. The chain is Chaperonin GroEL from Mycolicibacterium fallax (Mycobacterium fallax).